Reading from the N-terminus, the 98-residue chain is MSTLGILLPIALLLPLANPAENGDGQAMPRTRNLRSLSFGRTLRRLEKRGCDPTDGCQTTVCETDTGPCCCKPNFTCQISNSGTKSCSCSGQPSDCPV.

The signal sequence occupies residues 1-19 (MSTLGILLPIALLLPLANP). A propeptide spanning residues 20–49 (AENGDGQAMPRTRNLRSLSFGRTLRRLEKR) is cleaved from the precursor. Pro53 carries the post-translational modification 4-hydroxyproline. Glu63 carries the 4-carboxyglutamate modification. 4-hydroxyproline is present on residues Pro68, Pro93, and Pro97.

Post-translationally, contains 5 disulfide bonds. Expressed by the venom duct.

Its subcellular location is the secreted. Its function is as follows. Injection of the synthetic peptide causes a hyperexcitable phenotype in mice greater than three weeks of age at lower doses, and lethargy at higher doses. The protein is Conotoxin Di19A of Conus distans (Distant cone).